A 147-amino-acid polypeptide reads, in one-letter code: Hemoglobin subunit epsilon (147 aa).

Residues 3 to 147 (HFTAEEKSTI…VATALAHKYH (145 aa)) form the Globin domain. Phosphoserine occurs at positions 14 and 51. Heme b is bound by residues H64 and H93.

The protein belongs to the globin family. Heterotetramer of two alpha chains and two epsilon chains in early embryonic hemoglobin Gower-2; two zeta chains and two epsilon chains in early embryonic hemoglobin Gower-1. As to expression, red blood cells.

Its function is as follows. The epsilon chain is a beta-type chain of early mammalian embryonic hemoglobin. This Eulemur fulvus fulvus (Brown lemur) protein is Hemoglobin subunit epsilon (HBE1).